A 605-amino-acid chain; its full sequence is Adenine deaminase (605 aa).

The protein belongs to the metallo-dependent hydrolases superfamily. Adenine deaminase family. Requires Mn(2+) as cofactor.

It catalyses the reaction adenine + H2O + H(+) = hypoxanthine + NH4(+). This is Adenine deaminase from Staphylothermus marinus (strain ATCC 43588 / DSM 3639 / JCM 9404 / F1).